The primary structure comprises 312 residues: MFKSGSGSLKRSGSISSVKSFSGDSEKGLPPISRGSVSIASQNSEPLIVPASSSSFAATSDFVPEKTKSEGNLKDKSSVITGNFGSSGPINAHTNQNADGDRLVENLLLKESSKGRGSGTSDARHTATDSRLSQEVKQSFSEENAGGNDLNTGRGSHGTGDGVEQHYKFDCEEGMSAYHKRVVDTFFKYFEYSAEDGHSTLYSDVMFLSGHGDLGLLVMSRYQELMTLRVRSAIYGIFCYLQALTAYLTYFDAKVGQAIMLDEELEKYEIRLDVAQDDDPIVFQITTGVFTSGVAHDLRKLTQILEAFSLER.

Low complexity predominate over residues 1-23 (MFKSGSGSLKRSGSISSVKSFSG). 3 disordered regions span residues 1–37 (MFKS…RGSV), 62–99 (FVPE…QNAD), and 111–161 (ESSK…GTGD). The segment covering 63 to 77 (VPEKTKSEGNLKDKS) has biased composition (basic and acidic residues). Over residues 78 to 98 (SVITGNFGSSGPINAHTNQNA) the composition is skewed to polar residues. Basic and acidic residues predominate over residues 122–134 (DARHTATDSRLSQ).

The protein belongs to the phytoreovirus non-structural protein Pns12A family.

Its subcellular location is the host cytoplasm. Functionally, constituent of viral factories. Binds to ssRNA and dsRNA. This Alopecurus aequalis (Barnyard grass) protein is Non-structural protein 12A.